The primary structure comprises 394 residues: Arogenate dehydratase 2 (394 aa).

Positions 1–24 are disordered; sequence MAATTTLRSPKIPHPPPESTPSNL. A chloroplast-targeting transit peptide spans 1–47; the sequence is MAATTTLRSPKIPHPPPESTPSNLSYLSQISLTPVPKRRRFISIYAC. Residues 108–283 enclose the Prephenate dehydratase domain; that stretch reads RVAYQGVRGA…NVTRFLMLAR (176 aa). The region spanning 297–388 is the ACT domain; that stretch reads SVVFSLDEGP…TFLRVLGSYP (92 aa).

In terms of tissue distribution, expressed at low levels in petals (corollas and tubes), stems, leaves, pistils, stamens, ovaries and sepals.

It is found in the plastid. The protein resides in the chloroplast stroma. The enzyme catalyses prephenate + H(+) = 3-phenylpyruvate + CO2 + H2O. It carries out the reaction L-arogenate + H(+) = L-phenylalanine + CO2 + H2O. The protein operates within amino-acid biosynthesis; L-phenylalanine biosynthesis; L-phenylalanine from L-arogenate: step 1/1. Functionally, converts the prephenate and L-arogenate produced from the shikimate-chorismate pathway into 3-phenylpyruvate and phenylalanine (Phe), respectively. Involved in floral volatile benzenoids and phenylpropanoids (FVBP) production. This chain is Arogenate dehydratase 2, found in Petunia hybrida (Petunia).